The following is a 904-amino-acid chain: E3 ubiquitin-protein ligase ZNF598 (904 aa).

The RING-type zinc finger occupies 29-69 (CVLCCGDLEATALGRCDHPVCYRCSTKMRVLCEQRYCAVCR). A C2H2-type zinc finger spans residues 187–210 (PLCKFCDERYLDNDELLKHLRRDH). A Phosphotyrosine modification is found at tyrosine 306. Disordered regions lie at residues 312-469 (YSRQ…GLAL) and 490-656 (VSSV…LPRP). Low complexity predominate over residues 346–358 (AAAVRASVAAQQQ). Over residues 359–388 (EEARRSEDQEEGGRPKKEEAAARGPEDPRG) the composition is skewed to basic and acidic residues. Residues 404 to 416 (ETSTNGPVSQEAF) are compositionally biased toward polar residues. Residues 418–431 (VTGPAAPGCVGVPG) are compositionally biased toward low complexity. A phosphoserine mark is found at glycine 428, glycine 431, and serine 437. 2 stretches are compositionally biased toward low complexity: residues 447–461 (SLSASTSSSCSTAAT) and 502–513 (SLVSAWNSSSSS). Residues 521 to 531 (LSAQATGSGQP) show a composition bias toward polar residues. The segment covering 534 to 543 (KAGKGSRGGR) has biased composition (basic residues). Polar residues predominate over residues 564–584 (LLSTRPTGSVSSTLGLASIQP).

It belongs to the ZNF598/HEL2 family. In terms of assembly, interacts with the E2 ubiquitin-conjugating enzyme UBE2D3. Component of the 4EHP-GYF2 complex, at least composed of EIF4E2, GIGYF2 and ZNF598.

The protein resides in the cytoplasm. It localises to the cytosol. It carries out the reaction S-ubiquitinyl-[E2 ubiquitin-conjugating enzyme]-L-cysteine + [acceptor protein]-L-lysine = [E2 ubiquitin-conjugating enzyme]-L-cysteine + N(6)-ubiquitinyl-[acceptor protein]-L-lysine.. The protein operates within protein modification; protein ubiquitination. Its function is as follows. E3 ubiquitin-protein ligase that plays a key role in the ribosome quality control (RQC), a pathway that takes place when a ribosome has stalled during translation, leading to degradation of nascent peptide chains. ZNF598 is activated when ribosomes are stalled within an mRNA following translation of prematurely polyadenylated mRNAs. Acts as a ribosome collision sensor: specifically recognizes and binds collided di-ribosome, which arises when a trailing ribosome encounters a slower leading ribosome, leading to terminally arrest translation. Following binding to colliding ribosomes, mediates monoubiquitination of 40S ribosomal proteins RPS10/eS10 and RPS3/uS3, and 'Lys-63'-linked polyubiquitination of RPS20/uS10. Polyubiquitination of RPS20/uS10 promotes recruitment of the RQT (ribosome quality control trigger) complex, which drives the disassembly of stalled ribosomes, followed by degradation of nascent peptides. E3 ubiquitin-protein ligase activity is dependent on the E2 ubiquitin-conjugating enzyme UBE2D3. Also acts as an adapter that recruits the 4EHP-GYF2 complex to mRNAs. Independently of its role in RQC, may also act as a negative regulator of interferon-stimulated gene (ISG) expression. Functionally, (Microbial infection) Required for poxvirus protein synthesis by mediating ubiquitination of RPS10/eS10 and RPS20/uS10. Poxvirus encoding mRNAs contain unusual 5' poly(A) leaders and ZNF598 is required for their translational efficiency, possibly via its ability to suppress readthrough or sliding on shorter poly(A) tracts. The protein is E3 ubiquitin-protein ligase ZNF598 of Homo sapiens (Human).